The following is a 182-amino-acid chain: Thioredoxin F-type, chloroplastic (182 aa).

The N-terminal 69 residues, 1-69 (MALNLCTSPK…SVRSSLETAG (69 aa)), are a transit peptide targeting the chloroplast. Residues 70–181 (PTVTVGKVTE…LVAAIDTVRS (112 aa)) enclose the Thioredoxin domain. Active-site nucleophile residues include Cys106 and Cys109. Cys106 and Cys109 form a disulfide bridge.

It belongs to the thioredoxin family. Plant F-type subfamily. Forms a complex with heterodimeric ferredoxin-thioredoxin reductase (FTR) and ferredoxin.

The protein resides in the plastid. It is found in the chloroplast. Participates in various redox reactions through the reversible oxidation of the active center dithiol to a disulfide. The F form is known to activate a number of enzymes of the photosynthetic carbon cycle. This is Thioredoxin F-type, chloroplastic from Pisum sativum (Garden pea).